The sequence spans 253 residues: Shikimate dehydrogenase (253 aa).

The Proton acceptor role is filled by lysine 63. NADP(+) is bound at residue 115 to 119 (GAGGA).

This sequence belongs to the shikimate dehydrogenase family.

It catalyses the reaction shikimate + NADP(+) = 3-dehydroshikimate + NADPH + H(+). The protein operates within metabolic intermediate biosynthesis; chorismate biosynthesis; chorismate from D-erythrose 4-phosphate and phosphoenolpyruvate: step 4/7. The sequence is that of Shikimate dehydrogenase (aroE) from Thermotoga neapolitana (strain ATCC 49049 / DSM 4359 / NBRC 107923 / NS-E).